Here is a 232-residue protein sequence, read N- to C-terminus: Platelet-activating factor acetylhydrolase IB subunit alpha1 (232 aa).

Positions Met-1 to Gly-20 are disordered. The residue at position 2 (Ser-2) is an N-acetylserine. Phosphoserine is present on Ser-2. Active-site residues include Ser-48, Asp-193, and His-196.

Belongs to the 'GDSL' lipolytic enzyme family. Platelet-activating factor acetylhydrolase IB beta/gamma subunits subfamily. As to quaternary structure, forms a catalytic dimer which is either homodimer (alpha1/alpha1 homodimer) or heterodimer with PAFAH1B2 (alpha1/alpha2 heterodimer). Component of the cytosolic (PAF-AH (I)) heterotetrameric enzyme, which is composed of PAFAH1B1 (beta), PAFAH1B2 (alpha2) and PAFAH1B3 (alpha1) subunits. The catalytic activity of the enzyme resides in the alpha1 (PAFAH1B3) and alpha2 (PAFAH1B2) subunits, whereas the beta subunit (PAFAH1B1) has regulatory activity. Trimer formation is not essential for the catalytic activity. Interacts with VLDLR; this interaction may modulate the Reelin pathway. In terms of tissue distribution, expressed in brain, spleen, lung, liver, kidney and testis. Not expressed in heart and skeletal muscle. Expressed in fetal brain as heterodimer. Not expressed in adult tissues. Expressed exclusively in granule cells.

It is found in the cytoplasm. It carries out the reaction a 1-O-alkyl-2-acetyl-sn-glycero-3-phosphocholine + H2O = a 1-O-alkyl-sn-glycero-3-phosphocholine + acetate + H(+). It catalyses the reaction 1-O-hexadecyl-2-acetyl-sn-glycero-3-phosphocholine + H2O = 1-O-hexadecyl-sn-glycero-3-phosphocholine + acetate + H(+). The catalysed reaction is 1-O-hexadecyl-2-acetyl-sn-glycero-3-phosphate + H2O = 1-O-hexadecyl-sn-glycero-3-phosphate + acetate + H(+). With respect to regulation, beta subunit (PAFAH1B1) inhibits the acetylhydrolase activity of the alpha1/alpha1 catalytic homodimer. Its function is as follows. Alpha1 catalytic subunit of the cytosolic type I platelet-activating factor (PAF) acetylhydrolase (PAF-AH (I)) heterotetrameric enzyme that catalyzes the hydrolyze of the acetyl group at the sn-2 position of PAF and its analogs and modulates the action of PAF. The activity and substrate specificity of PAF-AH (I) are affected by its subunit composition. Both alpha1/alpha1 homodimer (PAFAH1B3/PAFAH1B3 homodimer) and alpha1/alpha2 heterodimer(PAFAH1B3/PAFAH1B2 heterodimer) hydrolyze 1-O-alkyl-2-acetyl-sn-glycero-3-phosphoric acid (AAGPA) more efficiently than PAF, but they have little hydrolytic activity towards 1-O-alkyl-2-acetyl-sn-glycero-3-phosphorylethanolamine (AAGPE). Plays an important role during the development of brain. This is Platelet-activating factor acetylhydrolase IB subunit alpha1 from Rattus norvegicus (Rat).